The sequence spans 448 residues: C4-dicarboxylate transport protein (448 aa).

Helical transmembrane passes span 22-42 (FQVVVAIVLGALLGHFEPAFA), 55-75 (LVKMIIAPVIFLTIVTGIAGM), 90-110 (TYFLFFSTLALIVGMVVAHVV), 137-157 (ELSLVGFLMDIIPATLISAFV), 159-179 (GNILQVLFVAVLFGIALALVG), 199-219 (LVHMLMKAAPIGAFGAIAFTI), and 232-252 (WLVGSFYLTSLFFVLVILGIV). Residues 428–448 (RAPPLQAPVPPPDAVAPVSAR) form a disordered region. Residues 432–441 (LQAPVPPPDA) show a composition bias toward pro residues.

Belongs to the dicarboxylate/amino acid:cation symporter (DAACS) (TC 2.A.23) family.

The protein localises to the cell inner membrane. Its function is as follows. Responsible for the transport of dicarboxylates such as succinate, fumarate, and malate from the periplasm across the membrane. This chain is C4-dicarboxylate transport protein, found in Xanthomonas campestris pv. campestris (strain 8004).